Reading from the N-terminus, the 198-residue chain is Imidazoleglycerol-phosphate dehydratase (198 aa).

This sequence belongs to the imidazoleglycerol-phosphate dehydratase family.

The protein resides in the cytoplasm. It carries out the reaction D-erythro-1-(imidazol-4-yl)glycerol 3-phosphate = 3-(imidazol-4-yl)-2-oxopropyl phosphate + H2O. Its pathway is amino-acid biosynthesis; L-histidine biosynthesis; L-histidine from 5-phospho-alpha-D-ribose 1-diphosphate: step 6/9. The sequence is that of Imidazoleglycerol-phosphate dehydratase from Magnetococcus marinus (strain ATCC BAA-1437 / JCM 17883 / MC-1).